The chain runs to 1817 residues: Breast cancer type 1 susceptibility protein homolog (1817 aa).

N-acetylmethionine is present on Met1. Residues 24 to 65 (CPICLELIKEPVSTQCDHIFCKFCMLKLLNQKKGPSQCPLCK) form an RING-type zinc finger. Lys109 is covalently cross-linked (Glycyl lysine isopeptide (Lys-Gly) (interchain with G-Cter in SUMO2)). Residue Ser114 is modified to Phosphoserine. Lys299 participates in a covalent cross-link: Glycyl lysine isopeptide (Lys-Gly) (interchain with G-Cter in SUMO2). Residues 305–346 (RSKQSGAAVSQQSRWADSKETCNGRPVPRTEGKADPNVDSLC) are disordered. The segment covering 308–319 (QSGAAVSQQSRW) has biased composition (polar residues). The segment covering 320-340 (ADSKETCNGRPVPRTEGKADP) has biased composition (basic and acidic residues). A Glycyl lysine isopeptide (Lys-Gly) (interchain with G-Cter in SUMO2) cross-link involves residue Lys337. Ser393 carries the phosphoserine modification. Lys457 is covalently cross-linked (Glycyl lysine isopeptide (Lys-Gly) (interchain with G-Cter in SUMO2)). Positions 497-503 (KLKRKRS) match the Nuclear localization signal motif. Residues Lys513 and Lys578 each participate in a glycyl lysine isopeptide (Lys-Gly) (interchain with G-Cter in SUMO2) cross-link. The segment covering 640–652 (SEETKKNNSNQTP) has biased composition (polar residues). Disordered regions lie at residues 640-720 (SEET…SPER), 735-768 (NKELGDLVLGGEPSGKPTEPSEESTSVSLVPDTD), 874-907 (LVGARSVPSREPSPKVTSRGEQKERQGQEESEIS), and 959-982 (GISQNSHFRQSVSPLRSSIKTDNR). Residues 669-679 (ADAKKNEPNEH) show a composition bias toward basic and acidic residues. 3 positions are modified to phosphoserine: Ser686, Ser706, and Ser717. A compositionally biased stretch (low complexity) spans 744–760 (GGEPSGKPTEPSEESTS). The segment covering 891 to 901 (SRGEQKERQGQ) has biased composition (basic and acidic residues). The segment covering 959–976 (GISQNSHFRQSVSPLRSS) has biased composition (polar residues). A Phosphoserine; by CHEK2 modification is found at Ser975. Lys1049 is covalently cross-linked (Glycyl lysine isopeptide (Lys-Gly) (interchain with G-Cter in SUMO2)). The interval 1146 to 1185 (LRRESSRSPSPVTHASKSRSLHRGSRKLEFSEESDSTEDE) is disordered. 2 positions are modified to phosphoserine: Ser1153 and Ser1155. Over residues 1161 to 1170 (SKSRSLHRGS) the composition is skewed to basic residues. The segment covering 1176 to 1185 (SEESDSTEDE) has biased composition (acidic residues). A phosphoserine mark is found at Ser1181 and Ser1242. The tract at residues 1259–1290 (SSQHSAALGSPANALSQDPDFNPPSKQRRHQA) is disordered. Phosphoserine occurs at positions 1298, 1304, and 1344. Thr1351 carries the phosphothreonine modification. Residues 1354 to 1381 (RATMKDNLIKLQQEMAQLEAVLEQHGSQ) are interaction with PALB2. Disordered stretches follow at residues 1375–1486 (LEQH…QEEL) and 1498–1534 (PHNLTGRSCLPRQDLEGTPYPESGIRLVSSRDPDSES). Phosphoserine occurs at positions 1380, 1414, and 1482. Composition is skewed to polar residues over residues 1405 to 1426 (NRSGTAILTSKNINENPVSQNP) and 1473 to 1485 (RSLQNRNSTSQEE). 2 consecutive BRCT domains span residues 1588–1682 (PKER…EFEV) and 1701–1800 (SQEK…AYLV).

Heterodimer with BARD1. Part of the BRCA1-associated genome surveillance complex (BASC), which contains BRCA1, MSH2, MSH6, MLH1, ATM, BLM, PMS2 and the MRE11-RAD50-NBN protein (MRN) complex. This association could be a dynamic process changing throughout the cell cycle and within subnuclear domains. Component of the BRCA1-A complex, at least composed of BRCA1, BARD1, UIMC1/RAP80, ABRAXAS1, BRCC3/BRCC36, BABAM2 and BABAM1/NBA1. Interacts (via the BRCT domains) with ABRAXAS1 (phosphorylated form); this is important for recruitment to sites of DNA damage. Can form a heterotetramer with two molecules of ABRAXAS1 (phosphorylated form). Component of the BRCA1-RBBP8 complex. Interacts (via the BRCT domains) with RBBP8 ('Ser-327' phosphorylated form); the interaction ubiquitinates RBBP8, regulates CHEK1 activation, and involves RBBP8 in BRCA1-dependent G2/M checkpoint control on DNA damage. Associates with RNA polymerase II holoenzyme. Interacts with SMC1A, NELFB, DCLRE1C, CLSPN. CHEK1, CHEK2, BAP1, BRCC3, UBXN1 and PCLAF. Interacts (via BRCT domains) with BRIP1 (phosphorylated form). Interacts with FANCD2 (ubiquitinated form). Interacts with H2AX (phosphorylated on 'Ser-140'). Interacts (via the BRCT domains) with ACACA (phosphorylated form); the interaction prevents dephosphorylation of ACACA. Part of a BRCA complex containing BRCA1, BRCA2 and PALB2. Interacts directly with PALB2; the interaction is essential for its function in HRR. Interacts directly with BRCA2; the interaction occurs only in the presence of PALB2 which serves as the bridging protein. Interacts (via the BRCT domains) with LMO4; the interaction represses the transcriptional activity of BRCA1. Interacts (via the BRCT domains) with CCAR2 (via N-terminus); the interaction represses the transcriptional activator activity of BRCA1. Interacts with EXD2. Interacts (via C-terminus) with DHX9; this interaction is direct and links BRCA1 to the RNA polymerase II holoenzyme. Interacts with DNA helicase ZGRF1; the interaction is increased following DNA damage induction. In terms of processing, phosphorylated in response to IR, UV, and various stimuli that cause checkpoint activation, probably by ATM or ATR. Phosphorylation at Ser-975 by CHEK2 regulates mitotic spindle assembly. Phosphorylation by AURKA regulates centrosomal microtubule nucleation. Autoubiquitinated, undergoes 'Lys-6'-linked polyubiquitination. 'Lys-6'-linked polyubiquitination does not promote degradation.

Its subcellular location is the nucleus. It localises to the chromosome. It is found in the cytoplasm. The enzyme catalyses S-ubiquitinyl-[E2 ubiquitin-conjugating enzyme]-L-cysteine + [acceptor protein]-L-lysine = [E2 ubiquitin-conjugating enzyme]-L-cysteine + N(6)-ubiquitinyl-[acceptor protein]-L-lysine.. Its pathway is protein modification; protein ubiquitination. Functionally, E3 ubiquitin-protein ligase that specifically mediates the formation of 'Lys-6'-linked polyubiquitin chains and plays a central role in DNA repair by facilitating cellular responses to DNA damage. It is unclear whether it also mediates the formation of other types of polyubiquitin chains. The BRCA1-BARD1 heterodimer coordinates a diverse range of cellular pathways such as DNA damage repair, ubiquitination and transcriptional regulation to maintain genomic stability. Regulates centrosomal microtubule nucleation. Required for appropriate cell cycle arrests after ionizing irradiation in both the S-phase and the G2 phase of the cell cycle. Required for FANCD2 targeting to sites of DNA damage. Inhibits lipid synthesis by binding to inactive phosphorylated ACACA and preventing its dephosphorylation. Contributes to homologous recombination repair (HRR) via its direct interaction with PALB2, fine-tunes recombinational repair partly through its modulatory role in the PALB2-dependent loading of BRCA2-RAD51 repair machinery at DNA breaks. Component of the BRCA1-RBBP8 complex which regulates CHEK1 activation and controls cell cycle G2/M checkpoints on DNA damage via BRCA1-mediated ubiquitination of RBBP8. Acts as a transcriptional activator. This Rattus norvegicus (Rat) protein is Breast cancer type 1 susceptibility protein homolog (Brca1).